A 368-amino-acid polypeptide reads, in one-letter code: Phosphoribosylformylglycinamidine cyclo-ligase (368 aa).

The protein belongs to the AIR synthase family.

It is found in the cytoplasm. It carries out the reaction 2-formamido-N(1)-(5-O-phospho-beta-D-ribosyl)acetamidine + ATP = 5-amino-1-(5-phospho-beta-D-ribosyl)imidazole + ADP + phosphate + H(+). Its pathway is purine metabolism; IMP biosynthesis via de novo pathway; 5-amino-1-(5-phospho-D-ribosyl)imidazole from N(2)-formyl-N(1)-(5-phospho-D-ribosyl)glycinamide: step 2/2. The chain is Phosphoribosylformylglycinamidine cyclo-ligase from Novosphingobium aromaticivorans (strain ATCC 700278 / DSM 12444 / CCUG 56034 / CIP 105152 / NBRC 16084 / F199).